A 480-amino-acid polypeptide reads, in one-letter code: Aspartyl/glutamyl-tRNA(Asn/Gln) amidotransferase subunit B (480 aa).

This sequence belongs to the GatB/GatE family. GatB subfamily. Heterotrimer of A, B and C subunits.

It catalyses the reaction L-glutamyl-tRNA(Gln) + L-glutamine + ATP + H2O = L-glutaminyl-tRNA(Gln) + L-glutamate + ADP + phosphate + H(+). The enzyme catalyses L-aspartyl-tRNA(Asn) + L-glutamine + ATP + H2O = L-asparaginyl-tRNA(Asn) + L-glutamate + ADP + phosphate + 2 H(+). Allows the formation of correctly charged Asn-tRNA(Asn) or Gln-tRNA(Gln) through the transamidation of misacylated Asp-tRNA(Asn) or Glu-tRNA(Gln) in organisms which lack either or both of asparaginyl-tRNA or glutaminyl-tRNA synthetases. The reaction takes place in the presence of glutamine and ATP through an activated phospho-Asp-tRNA(Asn) or phospho-Glu-tRNA(Gln). This Streptococcus pneumoniae serotype 19F (strain G54) protein is Aspartyl/glutamyl-tRNA(Asn/Gln) amidotransferase subunit B.